We begin with the raw amino-acid sequence, 178 residues long: ATP synthase subunit delta (178 aa).

It belongs to the ATPase delta chain family. F-type ATPases have 2 components, F(1) - the catalytic core - and F(0) - the membrane proton channel. F(1) has five subunits: alpha(3), beta(3), gamma(1), delta(1), epsilon(1). F(0) has three main subunits: a(1), b(2) and c(10-14). The alpha and beta chains form an alternating ring which encloses part of the gamma chain. F(1) is attached to F(0) by a central stalk formed by the gamma and epsilon chains, while a peripheral stalk is formed by the delta and b chains.

It localises to the cell membrane. In terms of biological role, f(1)F(0) ATP synthase produces ATP from ADP in the presence of a proton or sodium gradient. F-type ATPases consist of two structural domains, F(1) containing the extramembraneous catalytic core and F(0) containing the membrane proton channel, linked together by a central stalk and a peripheral stalk. During catalysis, ATP synthesis in the catalytic domain of F(1) is coupled via a rotary mechanism of the central stalk subunits to proton translocation. Its function is as follows. This protein is part of the stalk that links CF(0) to CF(1). It either transmits conformational changes from CF(0) to CF(1) or is implicated in proton conduction. This Acetivibrio thermocellus (strain ATCC 27405 / DSM 1237 / JCM 9322 / NBRC 103400 / NCIMB 10682 / NRRL B-4536 / VPI 7372) (Clostridium thermocellum) protein is ATP synthase subunit delta.